The chain runs to 619 residues: Magnesium-chelatase 67 kDa subunit (619 aa).

Ser33–Ser40 provides a ligand contact to ATP. The segment at Thr273–Glu321 is disordered. Residues Pro280 to Glu321 are compositionally biased toward acidic residues. Positions Leu431–Ser619 constitute a VWFA domain.

It belongs to the Mg-chelatase subunits D/I family.

It catalyses the reaction protoporphyrin IX + Mg(2+) + ATP + H2O = Mg-protoporphyrin IX + ADP + phosphate + 3 H(+). It participates in porphyrin-containing compound metabolism; bacteriochlorophyll biosynthesis. Its function is as follows. Involved in bacteriochlorophyll biosynthesis; introduces a magnesium ion into protoporphyrin IX to yield Mg-protoporphyrin IX. In Chlorobaculum parvum (strain DSM 263 / NCIMB 8327) (Chlorobium vibrioforme subsp. thiosulfatophilum), this protein is Magnesium-chelatase 67 kDa subunit (bchD).